A 95-amino-acid chain; its full sequence is uncharacterized protein (95 aa).

The 91-residue stretch at 2-92 (VREAAMLHIK…YTPFPTVEHF (91 aa)) folds into the ABM domain.

This is an uncharacterized protein from Bacillus subtilis (strain 168).